Here is a 368-residue protein sequence, read N- to C-terminus: Metacaspase-6 (368 aa).

Residues His-86 and Cys-139 contribute to the active site. S-nitrosocysteine is present on Cys-139. The segment at 153 to 174 (GESTKKKKDSGDSSTINKETEA) is disordered.

The protein belongs to the peptidase C14B family. Proteolytically processed; by an autocatalytic mechanism. Expressed in roots and flower buds.

This is Metacaspase-6 (AMC6) from Arabidopsis thaliana (Mouse-ear cress).